The sequence spans 163 residues: MAKDSSFDIVSKVELPEVTNAINTALKEIQNRYDFKGSKSDIKLEKEVLVLTSDDEFKLEQVKDVLISKLVKRNVPIKNLDYGKVEAAAGNTVRQRATLQQGIDKDNAKKINNIIKEMKLKVKTQVQDDQVRVTAKSRDDLQAVIAAVRSADLPIDVQFINYR.

Belongs to the YajQ family.

Its function is as follows. Nucleotide-binding protein. This chain is Nucleotide-binding protein BA_1166, found in Bacillus anthracis.